The sequence spans 695 residues: Putative ATP-dependent DNA helicase R568 (695 aa).

Residues 86–499 (KFSEEQIKYI…FRNEEIFDSN (414 aa)) form the UvrD-like helicase ATP-binding domain. Residue 107-114 (ACAGSGKT) coordinates ATP.

Belongs to the helicase family. UvrD subfamily.

It carries out the reaction Couples ATP hydrolysis with the unwinding of duplex DNA by translocating in the 3'-5' direction.. The catalysed reaction is ATP + H2O = ADP + phosphate + H(+). Functionally, ATP-dependent DNA helicase. The sequence is that of Putative ATP-dependent DNA helicase R568 from Acanthamoeba polyphaga mimivirus (APMV).